Reading from the N-terminus, the 234-residue chain is Peptidyl-prolyl cis-trans isomerase, rhodopsin-specific isozyme (234 aa).

The N-terminal stretch at 1–19 (MNILKILILLELIYTCVSG) is a signal peptide. Positions 29-187 (YMDVKHQKKP…DPVIIVNCGE (159 aa)) constitute a PPIase cyclophilin-type domain. N-linked (GlcNAc...) asparagine glycosylation occurs at Asn-67. The chain crosses the membrane as a helical span at residues 202 to 222 (ILGWIKAAGLPFCSSFIVLMI).

Belongs to the cyclophilin-type PPIase family. As to expression, expressed specifically in photoreceptor cells.

It is found in the membrane. The enzyme catalyses [protein]-peptidylproline (omega=180) = [protein]-peptidylproline (omega=0). PPIases accelerate the folding of proteins. It catalyzes the cis-trans isomerization of proline imidic peptide bonds in oligopeptides. Acts on the folding of rhodopsin RH1 and RH2 (but not RH3) and is required for visual transduction. This Calliphora vicina (Blue blowfly) protein is Peptidyl-prolyl cis-trans isomerase, rhodopsin-specific isozyme (NINAA).